A 176-amino-acid chain; its full sequence is N5-carboxyaminoimidazole ribonucleotide mutase (176 aa).

Residues serine 14, aspartate 17, and arginine 44 each coordinate substrate.

It belongs to the AIR carboxylase family. Class I subfamily.

The catalysed reaction is 5-carboxyamino-1-(5-phospho-D-ribosyl)imidazole + H(+) = 5-amino-1-(5-phospho-D-ribosyl)imidazole-4-carboxylate. The protein operates within purine metabolism; IMP biosynthesis via de novo pathway; 5-amino-1-(5-phospho-D-ribosyl)imidazole-4-carboxylate from 5-amino-1-(5-phospho-D-ribosyl)imidazole (N5-CAIR route): step 2/2. Catalyzes the conversion of N5-carboxyaminoimidazole ribonucleotide (N5-CAIR) to 4-carboxy-5-aminoimidazole ribonucleotide (CAIR). In Synechocystis sp. (strain ATCC 27184 / PCC 6803 / Kazusa), this protein is N5-carboxyaminoimidazole ribonucleotide mutase.